The sequence spans 577 residues: MALNGPGVYHRTREHEQKDASDITKNILAESWKSWPNEAAFDRLEEHRGPLRLTLKGTIPSWAGGSLYRTGPGQSRVEDTARGTHFTTHWFDGFAQTHRFDIIPSEDGETQVWYSSRRQADEWIADVKKKGWRSGMTFGQKADPCVGIFAKVMTLFEPKLGNHNVALLANVPGVPKDEKTEVLNGVTGPLGHRVNTSNLFVSTDYTGIRRIDPSTLQPLAETTQYDLHPSLSGPCSCSHAQRDPDSGDLFNFNLAFGRVPTYRIFRVDAASGETEVLATISDLNVPPAYMHSFFLTENHVVICIPASHYAWRGLKTQWEGNIIDSMKPFDKERKCKWLVVDRRHGKGLVATFSTPAAFFFHSINAFEKNIEDEDGTEQTDLFFDLAKYNNMDIIKGFYYDVLMDRDDATKKYWFKNDRYKNCAPTLTRYRFRLPSAPTPDTTFSASAEQVLAIPSPHAGELPTIHPLRNGKPYRYVYSASLRGLTTSVDALVKTDLDTSEAFIWTGPEGHTPGEPVFVPRPGAEAEDDGIVFSLVVDGVNEKAYILCLNGKTMEELGRAEADFAIGQGFHGIHLPAA.

Fe(2+) contacts are provided by His239, His291, His361, and His570.

The protein belongs to the carotenoid oxygenase family. Fe(2+) serves as cofactor.

The protein resides in the cytoplasm. Its subcellular location is the cytosol. The enzyme catalyses torulene + O2 = 4'-apo-beta-carotenal + 3-methyl-2-butenal. It functions in the pathway carotenoid biosynthesis. Functionally, torulene dioxygenase; part of the pathway that mediates the biosynthesis of neurosporaxanthin, a carboxylic apocarotenoid acting as an essential protective pigments and leading to orange pigmentation. CarT mediates the cleavage of torulene into beta-apo-4'-carotenal, the aldehyde corresponding to the acidic neurosporaxanthin. Is also active on other monocyclic synthetic substrates such as beta-apo-8'-carotenal and beta-apo-10'-carotenal to produce beta-apo-14'-carotenal and retinal(beta-apo-15'-carotenal), respectively. Neurosporaxanthin is synthesized from geranyl-geranyl pyrophosphate (GGPP) through several enzymatic activities. Phytoene synthase activity performed by the bifunctional enzyme carAR first produces phytoene from geranyl-geranyl pyrophosphate (GGPP). The phytoene dehydrogenase carB then introduces 4 desaturations to lead to lycopene which is substrate of the carotene cyclase activity of carAR that leads to the production of gamma-carotene. CarB then performs a 5th desaturation reaction to yield torulene. Torulene is the substrate of the dioxidase carT that breaks the molecule, removing five carbon atoms to yield beta-apo-4'-carotenal, whereas the aldehyde dehydrogenase carD mediates the last step by converting beta-apo-4'-carotenal into neurosporaxanthin. The protein is Torulene dioxygenase of Fusarium fujikuroi (Bakanae and foot rot disease fungus).